The following is a 45-amino-acid chain: Natriuretic peptide OsNP-d (45 aa).

Positions 1-5 are excised as a propeptide; the sequence is PAAGL. Cysteines 14 and 30 form a disulfide.

The protein belongs to the natriuretic peptide family. As to expression, expressed by the venom gland.

Its subcellular location is the secreted. In terms of biological role, snake venom natriuretic peptide that targets both NPR1 and NPR2. Exhibits hypotensive and vasodepressor activities. This chain is Natriuretic peptide OsNP-d, found in Oxyuranus scutellatus scutellatus (Australian taipan).